Consider the following 125-residue polypeptide: Succinate dehydrogenase cytochrome b560 subunit (125 aa).

3 helical membrane passes run Ile-29 to Thr-49, Ile-68 to Ile-88, and Ile-104 to Ile-124. His-83 is a binding site for heme.

This sequence belongs to the cytochrome b560 family. Forms part of complex II containing four subunits: a 70 kDa flavoprotein (FP), a 27 kDa iron-sulfur protein (IP), a cytochrome B and a membrane-anchoring protein. Heme serves as cofactor.

The protein localises to the mitochondrion inner membrane. The protein operates within carbohydrate metabolism; tricarboxylic acid cycle. Functionally, membrane-anchoring subunit of succinate dehydrogenase (SDH) that is involved in complex II of the mitochondrial electron transport chain and is responsible for transferring electrons from succinate to ubiquinone (coenzyme Q). In Porphyra purpurea (Red seaweed), this protein is Succinate dehydrogenase cytochrome b560 subunit (SDH3).